The following is a 537-amino-acid chain: Fucosyltransferase 6 (537 aa).

At 1 to 20 (MYHIFQISSEVFRAFGLKMK) the chain is on the cytoplasmic side. Residues 21–41 (ILLTLVFSGLLIWSVVLVSFS) traverse the membrane as a helical; Signal-anchor for type II membrane protein segment. The Lumenal segment spans residues 42 to 537 (NDFNNQLLVA…NDGLKLFDEL (496 aa)). N54, N231, and N378 each carry an N-linked (GlcNAc...) asparagine glycan.

It belongs to the glycosyltransferase 37 family. Expressed in roots and flowers.

It localises to the golgi apparatus. Its subcellular location is the golgi stack membrane. It participates in protein modification; protein glycosylation. May be involved in cell wall biosynthesis. May act as a fucosyltransferase. The sequence is that of Fucosyltransferase 6 (FUT6) from Arabidopsis thaliana (Mouse-ear cress).